A 506-amino-acid polypeptide reads, in one-letter code: Cysteine--tRNA ligase (506 aa).

Zn(2+) is bound at residue Cys-34. The short motif at 36 to 46 (PTVYDFAHIGN) is the 'HIGH' region element. Residues Cys-230, His-269, and Glu-273 each contribute to the Zn(2+) site. Positions 302–306 (KMSKS) match the 'KMSKS' region motif. Lys-305 provides a ligand contact to ATP.

It belongs to the class-I aminoacyl-tRNA synthetase family. As to quaternary structure, monomer. Requires Zn(2+) as cofactor.

The protein resides in the cytoplasm. It carries out the reaction tRNA(Cys) + L-cysteine + ATP = L-cysteinyl-tRNA(Cys) + AMP + diphosphate. The polypeptide is Cysteine--tRNA ligase (Brucella suis biovar 1 (strain 1330)).